The following is a 250-amino-acid chain: Vitamin B12 import ATP-binding protein BtuD (250 aa).

The 231-residue stretch at 3–233 (LRQASVLPRL…EVLSPVFGVA (231 aa)) folds into the ABC transporter domain. 29-36 (GPNGAGKS) lines the ATP pocket.

Belongs to the ABC transporter superfamily. Vitamin B12 importer (TC 3.A.1.13.1) family. The complex is composed of two ATP-binding proteins (BtuD), two transmembrane proteins (BtuC) and a solute-binding protein (BtuF).

It is found in the cell inner membrane. It catalyses the reaction an R-cob(III)alamin(out) + ATP + H2O = an R-cob(III)alamin(in) + ADP + phosphate + H(+). Its function is as follows. Part of the ABC transporter complex BtuCDF involved in vitamin B12 import. Responsible for energy coupling to the transport system. In Pectobacterium atrosepticum (strain SCRI 1043 / ATCC BAA-672) (Erwinia carotovora subsp. atroseptica), this protein is Vitamin B12 import ATP-binding protein BtuD.